The following is a 361-amino-acid chain: sn-glycerol-3-phosphate import ATP-binding protein UgpC (361 aa).

Residues 4 to 235 form the ABC transporter domain; that stretch reads VTLRNVRKTY…PATTFVASFI (232 aa). Position 37 to 44 (37 to 44) interacts with ATP; that stretch reads GPSGCGKS.

It belongs to the ABC transporter superfamily. sn-glycerol-3-phosphate importer (TC 3.A.1.1.3) family. In terms of assembly, the complex is composed of two ATP-binding proteins (UgpC), two transmembrane proteins (UgpA and UgpE) and a solute-binding protein (UgpB).

The protein localises to the cell inner membrane. The enzyme catalyses sn-glycerol 3-phosphate(out) + ATP + H2O = sn-glycerol 3-phosphate(in) + ADP + phosphate + H(+). Functionally, part of the ABC transporter complex UgpBAEC involved in sn-glycerol-3-phosphate (G3P) import. Responsible for energy coupling to the transport system. This Rhodopseudomonas palustris (strain BisA53) protein is sn-glycerol-3-phosphate import ATP-binding protein UgpC.